The sequence spans 167 residues: Lipoprotein signal peptidase (167 aa).

Transmembrane regions (helical) follow at residues 67-87 (WILV…LWRA) and 91-111 (LVAL…IDRI). Catalysis depends on residues aspartate 118 and aspartate 136. The helical transmembrane segment at 127 to 147 (FSWYVFNLADAAIVAGVALLI) threads the bilayer.

This sequence belongs to the peptidase A8 family.

It is found in the cell inner membrane. It catalyses the reaction Release of signal peptides from bacterial membrane prolipoproteins. Hydrolyzes -Xaa-Yaa-Zaa-|-(S,diacylglyceryl)Cys-, in which Xaa is hydrophobic (preferably Leu), and Yaa (Ala or Ser) and Zaa (Gly or Ala) have small, neutral side chains.. The protein operates within protein modification; lipoprotein biosynthesis (signal peptide cleavage). Functionally, this protein specifically catalyzes the removal of signal peptides from prolipoproteins. The sequence is that of Lipoprotein signal peptidase from Beijerinckia indica subsp. indica (strain ATCC 9039 / DSM 1715 / NCIMB 8712).